The chain runs to 252 residues: 3-dehydroquinate dehydratase (252 aa).

3-dehydroquinate-binding positions include serine 21, 46-48 (EWR), and arginine 82. The Proton donor/acceptor role is filled by histidine 143. The active-site Schiff-base intermediate with substrate is lysine 170. 3-dehydroquinate is bound by residues arginine 213, serine 232, and glutamine 236.

The protein belongs to the type-I 3-dehydroquinase family. As to quaternary structure, homodimer.

The catalysed reaction is 3-dehydroquinate = 3-dehydroshikimate + H2O. Its pathway is metabolic intermediate biosynthesis; chorismate biosynthesis; chorismate from D-erythrose 4-phosphate and phosphoenolpyruvate: step 3/7. Functionally, involved in the third step of the chorismate pathway, which leads to the biosynthesis of aromatic amino acids. Catalyzes the cis-dehydration of 3-dehydroquinate (DHQ) and introduces the first double bond of the aromatic ring to yield 3-dehydroshikimate. This chain is 3-dehydroquinate dehydratase, found in Escherichia coli O157:H7.